We begin with the raw amino-acid sequence, 269 residues long: Cytochrome c oxidase subunit 3 (269 aa).

Helical transmembrane passes span 24–44 (LFTS…MHGF), 46–66 (GFQY…GLWF), 90–110 (GVGL…WAFF), 138–160 (PLLN…HSLI), 167–187 (ALYG…FQGV), 207–227 (FGTG…AVGL), and 247–267 (ILYW…VYYW).

This sequence belongs to the cytochrome c oxidase subunit 3 family. Component of the cytochrome c oxidase (complex IV, CIV), a multisubunit enzyme composed of a catalytic core of 3 subunits and several supernumerary subunits. The complex exists as a monomer or a dimer and forms supercomplexes (SCs) in the inner mitochondrial membrane with ubiquinol-cytochrome c oxidoreductase (cytochrome b-c1 complex, complex III, CIII).

It localises to the mitochondrion inner membrane. It catalyses the reaction 4 Fe(II)-[cytochrome c] + O2 + 8 H(+)(in) = 4 Fe(III)-[cytochrome c] + 2 H2O + 4 H(+)(out). Its function is as follows. Component of the cytochrome c oxidase, the last enzyme in the mitochondrial electron transport chain which drives oxidative phosphorylation. The respiratory chain contains 3 multisubunit complexes succinate dehydrogenase (complex II, CII), ubiquinol-cytochrome c oxidoreductase (cytochrome b-c1 complex, complex III, CIII) and cytochrome c oxidase (complex IV, CIV), that cooperate to transfer electrons derived from NADH and succinate to molecular oxygen, creating an electrochemical gradient over the inner membrane that drives transmembrane transport and the ATP synthase. Cytochrome c oxidase is the component of the respiratory chain that catalyzes the reduction of oxygen to water. Electrons originating from reduced cytochrome c in the intermembrane space (IMS) are transferred via the dinuclear copper A center (CU(A)) of subunit 2 and heme A of subunit 1 to the active site in subunit 1, a binuclear center (BNC) formed by heme A3 and copper B (CU(B)). The BNC reduces molecular oxygen to 2 water molecules using 4 electrons from cytochrome c in the IMS and 4 protons from the mitochondrial matrix. This Emericella nidulans (Aspergillus nidulans) protein is Cytochrome c oxidase subunit 3 (cox3).